Consider the following 332-residue polypeptide: Putative symporter YfeH (332 aa).

The protein belongs to the bile acid:sodium symporter (BASS) (TC 2.A.28) family.

The sequence is that of Putative symporter YfeH (yfeH) from Escherichia coli (strain K12).